A 446-amino-acid chain; its full sequence is Hercynine oxygenase (446 aa).

Histidine 51 serves as a coordination point for Fe cation. Residue 87 to 90 (RASR) participates in gamma-L-glutamyl-L-cysteine binding. Fe cation contacts are provided by histidine 134 and histidine 138. Gamma-L-glutamyl-L-cysteine contacts are provided by aspartate 416 and arginine 420.

The protein belongs to the EgtB family. In terms of assembly, monomer. Fe(2+) is required as a cofactor.

The enzyme catalyses gamma-L-glutamyl-L-cysteine + hercynine + O2 = gamma-L-glutamyl-hercynylcysteine S-oxide + H2O. It functions in the pathway amino-acid biosynthesis; ergothioneine biosynthesis. Functionally, catalyzes the oxidative sulfurization of hercynine (N-alpha,N-alpha,N-alpha-trimethyl-L-histidine) into hercynyl-gamma-L-glutamyl-L-cysteine sulfoxide, a step in the biosynthesis pathway of ergothioneine. This is Hercynine oxygenase from Mycolicibacterium thermoresistibile (strain ATCC 19527 / DSM 44167 / CIP 105390 / JCM 6362 / NCTC 10409 / 316) (Mycobacterium thermoresistibile).